A 734-amino-acid polypeptide reads, in one-letter code: ATP-dependent RNA helicase SUV3L, mitochondrial (734 aa).

Residues methionine 1–alanine 60 constitute a mitochondrion transit peptide. A disordered region spans residues valine 58 to alanine 88. Residues glycine 62–tryptophan 76 are compositionally biased toward basic and acidic residues. The Helicase ATP-binding domain occupies phenylalanine 198 to lysine 356. Glycine 211 to threonine 218 is a binding site for ATP. Residues threonine 357–threonine 525 enclose the Helicase C-terminal domain. Asparagine 594 and asparagine 614 each carry an N-linked (GlcNAc...) asparagine glycan. Residues alanine 667–alanine 734 are disordered. The segment covering glutamate 684–serine 693 has biased composition (acidic residues). A compositionally biased stretch (basic and acidic residues) spans aspartate 695–isoleucine 709. Asparagine 699 carries N-linked (GlcNAc...) asparagine glycosylation. The span at glutamine 725–alanine 734 shows a compositional bias: polar residues.

This sequence belongs to the helicase family. In terms of assembly, homodimer; in free form. Component of the mitochondrial degradosome (mtEXO) complex which is a heteropentamer containing 2 copies of SUPV3L1 and 3 copies of PNPT1. Mg(2+) is required as a cofactor. The cofactor is Mn(2+).

It localises to the nucleus. The protein resides in the mitochondrion matrix. Its subcellular location is the mitochondrion nucleoid. It carries out the reaction ATP + H2O = ADP + phosphate + H(+). Major helicase player in mitochondrial RNA metabolism. Component of the mitochondrial degradosome (mtEXO) complex, that degrades 3' overhang double-stranded RNA with a 3'-to-5' directionality in an ATP-dependent manner. ATPase and ATP-dependent multisubstrate helicase, able to unwind double-stranded (ds) DNA and RNA, and RNA/DNA heteroduplexes in the 5'-to-3' direction. Plays a role in the RNA surveillance system in mitochondria; regulates the stability of mature mRNAs, the removal of aberrantly formed mRNAs and the rapid degradation of non coding processing intermediates. Confers salinity and drought stress tolerances by maintaining both photosynthesis and antioxidant machinery, probably via an increase in plant hormones levels such as gibberellic acid (GA(3)), the cytokinin zeatin (Z) and indole-3-acetic acid (IAA). This Oryza sativa subsp. japonica (Rice) protein is ATP-dependent RNA helicase SUV3L, mitochondrial.